Reading from the N-terminus, the 458-residue chain is NADH-ubiquinone oxidoreductase chain 4 (458 aa).

Helical transmembrane passes span 22–42, 63–83, 96–116, 117–137, 150–170, 194–214, 224–244, 257–277, 284–306, 311–333, 350–370, 391–413, and 434–454; these read FFWT…FIFT, MISA…ALAS, LLYI…FLST, NLMN…LIIF, IYLS…LLFL, ILWL…GFHL, TIAG…YGMI, LSLI…FICL, ALIA…TLSL, GAFI…ANSN, MLLP…LAMP, LTFP…MFML, and LTLF…NMII.

Belongs to the complex I subunit 4 family.

It localises to the mitochondrion membrane. The catalysed reaction is a ubiquinone + NADH + 5 H(+)(in) = a ubiquinol + NAD(+) + 4 H(+)(out). Its function is as follows. Core subunit of the mitochondrial membrane respiratory chain NADH dehydrogenase (Complex I) that is believed to belong to the minimal assembly required for catalysis. Complex I functions in the transfer of electrons from NADH to the respiratory chain. The immediate electron acceptor for the enzyme is believed to be ubiquinone. The protein is NADH-ubiquinone oxidoreductase chain 4 (MT-ND4) of Myxine glutinosa (Atlantic hagfish).